Reading from the N-terminus, the 229-residue chain is Protein OPG034 (229 aa).

Belongs to the orthopoxvirus OPG034 family.

The chain is Protein OPG034 (OPG034) from Vaccinia virus (strain Western Reserve) (VACV).